The sequence spans 492 residues: Probable endopolygalacturonase D (492 aa).

The first 16 residues, 1-16 (MKRSALILSFLPLVFG), serve as a signal peptide directing secretion. An intrachain disulfide couples cysteine 151 to cysteine 166. 4 PbH1 repeats span residues 216–238 (GTSV…AYWD), 258–280 (MYNS…EIES), 281–319 (TEHL…DIKE), and 320–341 (SSYF…AVTS). Asparagine 292 carries an N-linked (GlcNAc...) asparagine glycan. Aspartate 334 functions as the Proton donor in the catalytic mechanism. Cysteine 336 and cysteine 352 are oxidised to a cystine. Histidine 356 is a catalytic residue. PbH1 repeat units lie at residues 371-392 (VNGV…RIKT), 400-422 (VYNI…DVQQ), and 434-478 (TNGV…SITG). N-linked (GlcNAc...) asparagine glycans are attached at residues asparagine 407 and asparagine 441. 2 disulfide bridges follow: cysteine 461/cysteine 466 and cysteine 484/cysteine 491.

It belongs to the glycosyl hydrolase 28 family.

It is found in the secreted. The enzyme catalyses (1,4-alpha-D-galacturonosyl)n+m + H2O = (1,4-alpha-D-galacturonosyl)n + (1,4-alpha-D-galacturonosyl)m.. Functionally, involved in maceration and soft-rotting of plant tissue. Hydrolyzes the 1,4-alpha glycosidic bonds of de-esterified pectate in the smooth region of the plant cell wall. The chain is Probable endopolygalacturonase D (pgaD) from Aspergillus flavus (strain ATCC 200026 / FGSC A1120 / IAM 13836 / NRRL 3357 / JCM 12722 / SRRC 167).